Consider the following 546-residue polypeptide: Arginine--tRNA ligase (546 aa).

The short motif at alanine 122–histidine 132 is the 'HIGH' region element.

It belongs to the class-I aminoacyl-tRNA synthetase family. As to quaternary structure, monomer.

It localises to the cytoplasm. It catalyses the reaction tRNA(Arg) + L-arginine + ATP = L-arginyl-tRNA(Arg) + AMP + diphosphate. The sequence is that of Arginine--tRNA ligase from Thermotoga petrophila (strain ATCC BAA-488 / DSM 13995 / JCM 10881 / RKU-1).